Consider the following 191-residue polypeptide: Pyridoxal 5'-phosphate synthase subunit PdxT (191 aa).

46–48 (GES) contacts L-glutamine. Cys78 serves as the catalytic Nucleophile. L-glutamine is bound by residues Arg105 and 133–134 (IR). Catalysis depends on charge relay system residues His169 and Glu171.

It belongs to the glutaminase PdxT/SNO family. In the presence of PdxS, forms a dodecamer of heterodimers. Only shows activity in the heterodimer.

It carries out the reaction aldehydo-D-ribose 5-phosphate + D-glyceraldehyde 3-phosphate + L-glutamine = pyridoxal 5'-phosphate + L-glutamate + phosphate + 3 H2O + H(+). The enzyme catalyses L-glutamine + H2O = L-glutamate + NH4(+). Its pathway is cofactor biosynthesis; pyridoxal 5'-phosphate biosynthesis. Catalyzes the hydrolysis of glutamine to glutamate and ammonia as part of the biosynthesis of pyridoxal 5'-phosphate. The resulting ammonia molecule is channeled to the active site of PdxS. This chain is Pyridoxal 5'-phosphate synthase subunit PdxT, found in Brevibacillus brevis (strain 47 / JCM 6285 / NBRC 100599).